Here is a 485-residue protein sequence, read N- to C-terminus: Glutamate--tRNA ligase (485 aa).

The 'HIGH' region motif lies at 11-21; sequence PSPTGHLHIGN. Positions 252–256 match the 'KMSKS' region motif; it reads KLSKR. Lysine 255 provides a ligand contact to ATP.

This sequence belongs to the class-I aminoacyl-tRNA synthetase family. Glutamate--tRNA ligase type 1 subfamily. Monomer.

It is found in the cytoplasm. It catalyses the reaction tRNA(Glu) + L-glutamate + ATP = L-glutamyl-tRNA(Glu) + AMP + diphosphate. Catalyzes the attachment of glutamate to tRNA(Glu) in a two-step reaction: glutamate is first activated by ATP to form Glu-AMP and then transferred to the acceptor end of tRNA(Glu). This is Glutamate--tRNA ligase from Bacillus thuringiensis (strain Al Hakam).